A 1038-amino-acid polypeptide reads, in one-letter code: Inner tegument protein (1038 aa).

Residues 545–1038 are interaction with large tegument protein; sequence WGITPPVDVG…VPGNTSGSDP (494 aa).

It belongs to the herpesviridae inner tegument protein family. Interacts (via C-terminus) with the large tegument protein/LTP (via N-terminus).

Its subcellular location is the virion tegument. The protein localises to the host cytoplasm. The protein resides in the host nucleus. It is found in the host Golgi apparatus. It localises to the host trans-Golgi network. Its function is as follows. Plays an essential role in cytoplasmic secondary envelopment during viral egress. Interacts with the capsid via the large tegument protein/LTP and participates in its transport to the host trans-Golgi network (TGN) where secondary envelopment occurs. Modulates tegumentation and capsid accumulation at the viral assembly complex. This is Inner tegument protein (21) from Homo sapiens (Human).